Reading from the N-terminus, the 612-residue chain is Probable methyltransferase PMT9 (612 aa).

The Cytoplasmic portion of the chain corresponds to 1 to 14 (MKHFRTERVRATPK). The chain crosses the membrane as a helical; Signal-anchor for type II membrane protein span at residues 15–35 (LFTYVLVGFIALLGLTCLYYG). The Lumenal portion of the chain corresponds to 36–612 (SSFAPGSRKS…LWSLPAISVS (577 aa)). N-linked (GlcNAc...) asparagine glycosylation is found at Asn-107, Asn-383, and Asn-562.

This sequence belongs to the methyltransferase superfamily.

Its subcellular location is the golgi apparatus membrane. The protein is Probable methyltransferase PMT9 of Arabidopsis thaliana (Mouse-ear cress).